A 77-amino-acid polypeptide reads, in one-letter code: Translation initiation factor IF-1, chloroplastic (77 aa).

One can recognise an S1-like domain in the interval 1–71 (MKEQKWVHEG…TRGRIIYRLR (71 aa)).

It belongs to the IF-1 family. In terms of assembly, component of the 30S ribosomal translation pre-initiation complex which assembles on the 30S ribosome in the order IF-2 and IF-3, IF-1 and N-formylmethionyl-tRNA(fMet); mRNA recruitment can occur at any time during PIC assembly.

The protein localises to the plastid. Its subcellular location is the chloroplast. In terms of biological role, one of the essential components for the initiation of protein synthesis. Stabilizes the binding of IF-2 and IF-3 on the 30S subunit to which N-formylmethionyl-tRNA(fMet) subsequently binds. Helps modulate mRNA selection, yielding the 30S pre-initiation complex (PIC). Upon addition of the 50S ribosomal subunit IF-1, IF-2 and IF-3 are released leaving the mature 70S translation initiation complex. In Cercidiphyllum japonicum (Katsura tree), this protein is Translation initiation factor IF-1, chloroplastic.